Here is a 127-residue protein sequence, read N- to C-terminus: Transcription antitermination protein NusB (127 aa).

The protein belongs to the NusB family.

In terms of biological role, involved in transcription antitermination. Required for transcription of ribosomal RNA (rRNA) genes. Binds specifically to the boxA antiterminator sequence of the ribosomal RNA (rrn) operons. The protein is Transcription antitermination protein NusB of Lysinibacillus sphaericus (strain C3-41).